A 151-amino-acid polypeptide reads, in one-letter code: UPF0756 membrane protein Lreu_0946 (151 aa).

Transmembrane regions (helical) follow at residues 4 to 24, 52 to 72, 77 to 97, and 115 to 135; these read WLFL…SLII, WGVT…QIGF, AAFK…VAIL, and LVLG…GPVI.

It belongs to the UPF0756 family.

The protein resides in the cell membrane. The protein is UPF0756 membrane protein Lreu_0946 of Limosilactobacillus reuteri (strain DSM 20016) (Lactobacillus reuteri).